The sequence spans 39 residues: SPbeta prophage-derived membrane protein YosA (39 aa).

Residues 19-39 (SFVLIVVLFILLIIVGATFLY) traverse the membrane as a helical segment.

Belongs to the SscA family.

Its subcellular location is the membrane. The chain is SPbeta prophage-derived membrane protein YosA (yosA) from Bacillus subtilis (strain 168).